A 569-amino-acid polypeptide reads, in one-letter code: CUE domain-containing protein 5 (569 aa).

One can recognise a CUE domain in the interval Met-17–Asp-60. 3 disordered regions span residues Met-67–Ser-139, Asp-175–Ala-275, and Glu-311–Thr-569. A compositionally biased stretch (basic and acidic residues) spans Ala-79–Ala-100. Residues Asn-104–Lys-113 show a composition bias toward basic residues. The segment covering Ser-234–Leu-249 has biased composition (basic and acidic residues). Positions Glu-250–Ser-274 are enriched in low complexity. The segment covering Val-329–Lys-340 has biased composition (basic and acidic residues). Residues Glu-347–Leu-364 are compositionally biased toward polar residues. 3 stretches are compositionally biased toward basic and acidic residues: residues Glu-367–Thr-381, Ile-399–Asp-500, and Lys-507–Glu-558.

Its subcellular location is the cytoplasm. The sequence is that of CUE domain-containing protein 5 from Schizosaccharomyces pombe (strain 972 / ATCC 24843) (Fission yeast).